A 380-amino-acid chain; its full sequence is Cytochrome b (380 aa).

Helical transmembrane passes span 34-54 (FGSL…LLAM), 78-99 (WLIR…FLHI), 114-134 (WNTG…GYVL), and 179-199 (FFAL…IHLT). Histidine 84 and histidine 98 together coordinate heme b. Positions 183 and 197 each coordinate heme b. An a ubiquinone-binding site is contributed by histidine 202. The next 4 helical transmembrane spans lie at 227–247 (LKDI…ALFS), 289–309 (LGGV…PFLH), 321–341 (LSQI…WIGS), and 348–368 (FIII…ILFP).

This sequence belongs to the cytochrome b family. In terms of assembly, the cytochrome bc1 complex contains 11 subunits: 3 respiratory subunits (MT-CYB, CYC1 and UQCRFS1), 2 core proteins (UQCRC1 and UQCRC2) and 6 low-molecular weight proteins (UQCRH/QCR6, UQCRB/QCR7, UQCRQ/QCR8, UQCR10/QCR9, UQCR11/QCR10 and a cleavage product of UQCRFS1). This cytochrome bc1 complex then forms a dimer. It depends on heme b as a cofactor.

Its subcellular location is the mitochondrion inner membrane. Component of the ubiquinol-cytochrome c reductase complex (complex III or cytochrome b-c1 complex) that is part of the mitochondrial respiratory chain. The b-c1 complex mediates electron transfer from ubiquinol to cytochrome c. Contributes to the generation of a proton gradient across the mitochondrial membrane that is then used for ATP synthesis. In Pavo muticus (Green peafowl), this protein is Cytochrome b (MT-CYB).